Reading from the N-terminus, the 283-residue chain is Nucleoid occlusion protein (283 aa).

Positions 1–21 (MKHSFSRFFGFGEKEEEPEIA) are disordered. The segment at residues 148–167 (EALAQRLGKGQSTIANKLRL) is a DNA-binding region (H-T-H motif).

This sequence belongs to the ParB family.

Its subcellular location is the cytoplasm. It is found in the nucleoid. Effects nucleoid occlusion by binding relatively nonspecifically to DNA and preventing the assembly of the division machinery in the vicinity of the nucleoid, especially under conditions that disturb the cell cycle. It helps to coordinate cell division and chromosome segregation by preventing the formation of the Z ring through the nucleoid, which would cause chromosome breakage. The sequence is that of Nucleoid occlusion protein from Bacillus velezensis (strain DSM 23117 / BGSC 10A6 / LMG 26770 / FZB42) (Bacillus amyloliquefaciens subsp. plantarum).